A 956-amino-acid chain; its full sequence is Zinc finger CCHC domain-containing protein 14 (956 aa).

Disordered regions lie at residues 25–50 (SSLN…PSGA), 78–99 (ALHT…GKHG), 206–229 (SSSS…KVGA), 243–276 (GIPS…GTGS), 361–464 (KEKS…EKEK), 485–505 (PVQN…PQLM), 543–583 (LEER…QGLS), and 750–786 (FYSG…PQPA). The segment covering 29-43 (SGGGGGGGGGGGGKS) has biased composition (gly residues). Low complexity-rich tracts occupy residues 206 to 225 (SSSS…PSLP) and 246 to 265 (SSQS…SASL). The segment covering 369–389 (LNSSAPSLVTSSGVARVTPTS) has biased composition (polar residues). Over residues 423 to 432 (SSEYSSSSSS) the composition is skewed to low complexity. Positions 438–464 (VREESSDSAEESDRRVDIHVEGTEKEK) are enriched in basic and acidic residues. The segment covering 750–768 (FYSGGAGSSSPGNIPASSQ) has biased composition (low complexity). A CCHC-type zinc finger spans residues 913 to 930 (LSCYNCGATGHRAQDCKQ).

This chain is Zinc finger CCHC domain-containing protein 14 (Zcchc14), found in Mus musculus (Mouse).